We begin with the raw amino-acid sequence, 507 residues long: Cell cycle serine/threonine-protein kinase hsk1 (507 aa).

Ser22 is modified (phosphoserine). Residues 68–433 enclose the Protein kinase domain; that stretch reads YRLIEKIGEG…AEEALDHDFL (366 aa). Residues 74–82 and Lys129 contribute to the ATP site; that span reads IGEGTFSSV. The active-site Proton acceptor is the Asp216. Residue Thr291 is modified to Phosphothreonine. The tract at residues 475–507 is disordered; that stretch reads FKEQEETDEPTSLSKRKRSIDEILPNDALQDGA. The residue at position 493 (Ser493) is a Phosphoserine.

Belongs to the protein kinase superfamily. Ser/Thr protein kinase family. CDC7 subfamily. As to quaternary structure, heterodimer with the regulatory subunit him1/dfp1. May form homooligomeric complexes. Interacts with mcm10. Autophosphorylated. Phosphorylated by cds1 in vitro.

It localises to the nucleus. The catalysed reaction is L-seryl-[protein] + ATP = O-phospho-L-seryl-[protein] + ADP + H(+). The enzyme catalyses L-threonyl-[protein] + ATP = O-phospho-L-threonyl-[protein] + ADP + H(+). Its activity is regulated as follows. Phosphorylation of exogenous substrates activated by Dfp1. Its function is as follows. Required for G1/S transition. Plays a role in DNA replication checkpoint signaling through regulating rad3 and cds1. Involved in the maintenance of mitotic chromosome structures during S phase through regulating the function of rad21. Required for initiation of mitotic DNA replication through phosphorylating mcm2/cdc19. Required for genome integrity. The polypeptide is Cell cycle serine/threonine-protein kinase hsk1 (hsk1) (Schizosaccharomyces pombe (strain 972 / ATCC 24843) (Fission yeast)).